We begin with the raw amino-acid sequence, 351 residues long: L-threonine 3-dehydrogenase (351 aa).

C39 contacts Zn(2+). Active-site charge relay system residues include T41 and H44. The Zn(2+) site is built by H64, E65, C94, C97, C100, and C108. NAD(+)-binding positions include I176, D196, R201, 271 to 273 (LGI), and 295 to 296 (IY).

This sequence belongs to the zinc-containing alcohol dehydrogenase family. In terms of assembly, homotetramer. Zn(2+) is required as a cofactor.

It localises to the cytoplasm. The catalysed reaction is L-threonine + NAD(+) = (2S)-2-amino-3-oxobutanoate + NADH + H(+). It participates in amino-acid degradation; L-threonine degradation via oxydo-reductase pathway; glycine from L-threonine: step 1/2. Its function is as follows. Catalyzes the NAD(+)-dependent oxidation of L-threonine to 2-amino-3-ketobutyrate. In Francisella tularensis subsp. novicida (strain U112), this protein is L-threonine 3-dehydrogenase.